Consider the following 37-residue polypeptide: Large ribosomal subunit protein bL36 (37 aa).

This sequence belongs to the bacterial ribosomal protein bL36 family.

The protein is Large ribosomal subunit protein bL36 of Nocardioides sp. (strain ATCC BAA-499 / JS614).